The primary structure comprises 443 residues: Fatty acid desaturase 3 (443 aa).

Topologically, residues M1–P130 are cytoplasmic. Residues L18 to A95 enclose the Cytochrome b5 heme-binding domain. The helical transmembrane segment at A131–I151 threads the bilayer. Position 152 (Y152) is a topological domain, lumenal. A helical transmembrane segment spans residues M153 to A173. At Q174–N259 the chain is on the cytoplasmic side. The short motif at H180 to H184 is the Histidine box-1 element. The Histidine box-2 signature appears at H217–H221. The helical transmembrane segment at H260 to V280 threads the bilayer. The Lumenal portion of the chain corresponds to E281–N282. Residues L283–A303 form a helical membrane-spanning segment. A topological domain (cytoplasmic) is located at residue R304. Residues F305–V325 form a helical membrane-spanning segment. At R326 to Q443 the chain is on the lumenal side. The Histidine box-3 motif lies at Q381–H385.

This sequence belongs to the fatty acid desaturase type 1 family.

Its subcellular location is the endoplasmic reticulum membrane. It carries out the reaction an N-acylsphing-4-enine + 2 Fe(II)-[cytochrome b5] + O2 + 2 H(+) = an N-acyl-sphinga-4E,14Z-dienine + 2 Fe(III)-[cytochrome b5] + 2 H2O. The catalysed reaction is N-(hexanoyl)sphing-4-enine + 2 Fe(II)-[cytochrome b5] + O2 + 2 H(+) = N-hexanoyl-sphinga-4E,14Z-dienine + 2 Fe(III)-[cytochrome b5] + 2 H2O. The enzyme catalyses sphing-4-enine + 2 Fe(II)-[cytochrome b5] + O2 + 2 H(+) = sphinga-4E,14Z-dienine + 2 Fe(III)-[cytochrome b5] + 2 H2O. It catalyses the reaction (11E)-octadecenoyl-CoA + 2 Fe(II)-[cytochrome b5] + O2 + 2 H(+) = (11E,13Z)-octadecadienoyl-CoA + 2 Fe(III)-[cytochrome b5] + 2 H2O. It carries out the reaction N-acyl-1-deoxysphinganine + 2 Fe(II)-[cytochrome b5] + O2 + 2 H(+) = N-acyl-1-deoxysphing-14Z-enine + 2 Fe(III)-[cytochrome b5] + 2 H2O. The catalysed reaction is an N-acylsphinganine + 2 Fe(II)-[cytochrome b5] + O2 + 2 H(+) = an N-acylsphing-14Z-enine + 2 Fe(III)-[cytochrome b5] + 2 H2O. Its pathway is lipid metabolism; polyunsaturated fatty acid biosynthesis. It functions in the pathway lipid metabolism; sphingolipid metabolism. Its function is as follows. Mammals have different sphingoid bases that differ in their length and/or pattern of desaturation and hydroxyl groups. The predominant sphingoid base that comprises mammalian ceramides is sphing-4-enine (sphingosine or SPH) which has a trans (E) desaturation at carbon 4. FADS3 is a desaturase that introduces a cis (Z) double bond between carbon 14 and carbon 15 of the sphingoid base (also known as long chain base, LCB), producing LCBs such as sphinga-4,14-dienine (SPD, d18:2(4E,14Z)) from SPH. Prefers SPH-containing ceramides (N-acylsphing-4-enines) as substrates. Capable of metabolizing also the SPH in its free form. SPD ceramides occur widely in mammalian tissues and cells. Due to their unusual structure containing a cis double bond, SPD ceramides may have an opposite, negative role in lipid microdomain formation relative to conventional ceramides. Could be involved in the detoxification of 1-deoxy sphingolipids, by desaturating the cytotoxic 1-deoxysphinganine (1-deoxySA, m18:0), produced under pathological conditions, to 1-deoxysphingenine (1-deoxysphingosine, 1-deoxySO, m18:1). Although prefers SPH-containing ceramides (N-acylsphing-4-enines) as substrates, it also exhibits activity toward dihydrosphingosine-containing CERs (N-acylsphinganines) and produces 14Z-SPH-containing sphingolipids. Its desaturase mechanism involves an electron transfer facilitated by cytochrome b5. FADS3 also acts as a methyl-end fatty acyl coenzyme A (CoA) desaturase that introduces a cis double bond between the preexisting double bond and the terminal methyl group of the fatty acyl chain. Desaturates (11E)-octadecenoate (trans-vaccenoate, the predominant trans fatty acid in human milk) at carbon 13 to generate (11E,13Z)-octadecadienoate (also known as conjugated linoleic acid 11E,13Z-CLA). This is Fatty acid desaturase 3 from Bos taurus (Bovine).